The following is a 132-amino-acid chain: Small ribosomal subunit protein uS8 (132 aa).

The protein belongs to the universal ribosomal protein uS8 family. Part of the 30S ribosomal subunit. Contacts proteins S5 and S12.

Its function is as follows. One of the primary rRNA binding proteins, it binds directly to 16S rRNA central domain where it helps coordinate assembly of the platform of the 30S subunit. The sequence is that of Small ribosomal subunit protein uS8 from Psychrobacter sp. (strain PRwf-1).